The chain runs to 378 residues: MDSTTHGPRTHVPGRLFIGLMSGTSMDGADGVLVRLDGPRPEVLASASLPMPAALRDELFALNHAGANELERAALAANGLARLYARAVRQLLDQAGLQPGDVAAIGAHGQTVRHRPDLGYTLQLNAPALLAELAGIDVVADFRSRDVAAGGQGAPLVPPFHAALFAGGQARAVLNLGGIANVTLLEPGRPPRGFDTGPANVLLDAWCQRHTGQPYDADGRFAAQGQVLADLLEHLIASEPWFALAPPKSTGRDLFNLDWLLARLQAFDGPAPQPQDVQATLQRLTARTVANAIDASAAAPRDVLVCGGGARNPGLMRELAYCLQRPVRPTDDAGVPAQWVEALAFAWLAQACLDRIPAGLPTVTGARAARVLGALYPA.

Residue 23–30 (GTSMDGAD) participates in ATP binding.

Belongs to the anhydro-N-acetylmuramic acid kinase family.

It catalyses the reaction 1,6-anhydro-N-acetyl-beta-muramate + ATP + H2O = N-acetyl-D-muramate 6-phosphate + ADP + H(+). It participates in amino-sugar metabolism; 1,6-anhydro-N-acetylmuramate degradation. Its pathway is cell wall biogenesis; peptidoglycan recycling. Functionally, catalyzes the specific phosphorylation of 1,6-anhydro-N-acetylmuramic acid (anhMurNAc) with the simultaneous cleavage of the 1,6-anhydro ring, generating MurNAc-6-P. Is required for the utilization of anhMurNAc either imported from the medium or derived from its own cell wall murein, and thus plays a role in cell wall recycling. The sequence is that of Anhydro-N-acetylmuramic acid kinase from Bordetella pertussis (strain Tohama I / ATCC BAA-589 / NCTC 13251).